The sequence spans 407 residues: Phosphopentomutase (407 aa).

Positions 10, 306, 311, 347, 348, and 359 each coordinate Mn(2+).

The protein belongs to the phosphopentomutase family. It depends on Mn(2+) as a cofactor.

It localises to the cytoplasm. The catalysed reaction is 2-deoxy-alpha-D-ribose 1-phosphate = 2-deoxy-D-ribose 5-phosphate. It catalyses the reaction alpha-D-ribose 1-phosphate = D-ribose 5-phosphate. The protein operates within carbohydrate degradation; 2-deoxy-D-ribose 1-phosphate degradation; D-glyceraldehyde 3-phosphate and acetaldehyde from 2-deoxy-alpha-D-ribose 1-phosphate: step 1/2. Functionally, isomerase that catalyzes the conversion of deoxy-ribose 1-phosphate (dRib-1-P) and ribose 1-phosphate (Rib-1-P) to deoxy-ribose 5-phosphate (dRib-5-P) and ribose 5-phosphate (Rib-5-P), respectively. The polypeptide is Phosphopentomutase (Salmonella arizonae (strain ATCC BAA-731 / CDC346-86 / RSK2980)).